The primary structure comprises 343 residues: 3-dehydroquinate synthase (343 aa).

Residues 61 to 66, 95 to 96, 119 to 120, Lys-132, Lys-141, Asn-142, and 159 to 162 contribute to the NAD(+) site; these read SGEKYK, GV, TT, and FLKT. Positions 174, 231, and 248 each coordinate Zn(2+).

The protein belongs to the sugar phosphate cyclases superfamily. Dehydroquinate synthase family. In terms of assembly, homodimer. NAD(+) is required as a cofactor. It depends on Co(2+) as a cofactor. Zn(2+) serves as cofactor.

The protein localises to the cytoplasm. The enzyme catalyses 7-phospho-2-dehydro-3-deoxy-D-arabino-heptonate = 3-dehydroquinate + phosphate. The protein operates within metabolic intermediate biosynthesis; chorismate biosynthesis; chorismate from D-erythrose 4-phosphate and phosphoenolpyruvate: step 2/7. Functionally, catalyzes the conversion of 3-deoxy-D-arabino-heptulosonate 7-phosphate (DAHP) to dehydroquinate (DHQ). This is 3-dehydroquinate synthase from Helicobacter pylori (strain ATCC 700392 / 26695) (Campylobacter pylori).